A 140-amino-acid chain; its full sequence is MGRLVFVSFGLLVVFLSLSGTGADCPSDWSSYEGHCYRVFQQEMTWEAAEKFCTQQHQKSHPVYFRSSEEVDFLVSILKFDLFWMGWRDIWNERRLQWSDGTKVNYKAWSAEPECVVCRATDNQWFSTSCSKTHNVICKF.

A signal peptide spans M1 to A23. Disulfide bonds link C25–C36, C53–C138, and C115–C130. Residues Y32–K139 enclose the C-type lectin domain.

The protein belongs to the snaclec family. As to quaternary structure, heteromultimer; disulfide-linked. As to expression, expressed by the venom gland.

It localises to the secreted. Its function is as follows. Interferes with one step of hemostasis (modulation of platelet aggregation, or coagulation cascade, for example). The chain is C-type lectin 6 from Crotalus adamanteus (Eastern diamondback rattlesnake).